The following is a 637-amino-acid chain: Type II restriction enzyme and methyltransferase RM.BcgI (637 aa).

It in the C-terminal section; belongs to the N(4)/N(6)-methyltransferase family. In terms of assembly, heterotrimer of two A and one B subunit. Both subunits are necessary for DNA-binding, which is sequence non-specific. The cofactor is Mg(2+).

The enzyme catalyses Endonucleolytic cleavage of DNA to give specific double-stranded fragments with terminal 5'-phosphates.. The catalysed reaction is a 2'-deoxyadenosine in DNA + S-adenosyl-L-methionine = an N(6)-methyl-2'-deoxyadenosine in DNA + S-adenosyl-L-homocysteine + H(+). Its activity is regulated as follows. DNA restriction requires S-adenosyl-L-methionine and Mg(2+), and is inhibited by S-adenosyl-homocysteine. SAM may be a cofactor for DNA restriction. A B, G, H and S subtype restriction enzyme that recognizes the double-stranded sequence 5'-CGAN(6)TGC-3' and cleaves bilaterally and symmetrically 10 base pairs upstream and 12 base pairs downstream of the sequence to release a 34-base pair fragment. Methylation of the recognition sequence occurs on the adenine in either one or both strands; seems to methylate restricted DNA. This subunit has no methylation or DNA restriction activity on its own. The polypeptide is Type II restriction enzyme and methyltransferase RM.BcgI (Heyndrickxia coagulans (Weizmannia coagulans)).